Here is a 337-residue protein sequence, read N- to C-terminus: Transaldolase (337 aa).

A Nuclear localization signal motif is present at residues 1–10 (MSSSPVKRQR). K115 is modified (N6-acetyllysine). K142 serves as the catalytic Schiff-base intermediate with substrate. An N6-acetyllysine modification is found at K219. A phosphoserine mark is found at S237 and S256. An N6-acetyllysine mark is found at K269, K286, and K321.

The protein belongs to the transaldolase family. Type 1 subfamily. Homodimer. Heterodimer with isoform 2. Interacts with KPNA1 and KPNA4.

Its subcellular location is the nucleus. The protein resides in the cytoplasm. The catalysed reaction is D-sedoheptulose 7-phosphate + D-glyceraldehyde 3-phosphate = D-erythrose 4-phosphate + beta-D-fructose 6-phosphate. It participates in carbohydrate degradation; pentose phosphate pathway; D-glyceraldehyde 3-phosphate and beta-D-fructose 6-phosphate from D-ribose 5-phosphate and D-xylulose 5-phosphate (non-oxidative stage): step 2/3. In terms of biological role, catalyzes the rate-limiting step of the non-oxidative phase in the pentose phosphate pathway. Catalyzes the reversible conversion of sedheptulose-7-phosphate and D-glyceraldehyde 3-phosphate into erythrose-4-phosphate and beta-D-fructose 6-phosphate. Not only acts as a pentose phosphate pathway enzyme, but also affects other metabolite pathways by altering its subcellular localization between the nucleus and the cytoplasm. In Homo sapiens (Human), this protein is Transaldolase.